The chain runs to 690 residues: Crooked neck-like protein 1 (690 aa).

16 HAT repeats span residues 61–93, 95–127, 129–161, 163–194, 196–227, 229–264, 266–300, 310–342, 344–378, 388–424, 459–491, 493–527, 529–560, 565–606, 608–646, and 648–673; these read DYKLRKRKTFEDNIRKNRTVISNWIKYAQWEES, KEIQRARSIYERALDVDYRNITLWLKYAEMEMK, RQVNHARNIWDRAITTLPRVNQFWYKYTYMEEM, GNVAGARQVFERWMEWQPEEQAWHSYINFELR, KEVERARTIYERFVLVHPAVKNWIKYARFEEK, AYFAHARKVYERAVEFFGDEHMDEHLYVAFAKFEEN, KEFERVRVIYKYALDRISKQEAQELFKNYTIFEKK, IIVSKRRFQYEEEVKANPHNYDAWFDYLRLVES, AEADTVREVYERAIANVPPIQEKRHWKRYIYLWVN, KDPERTRQVYQASLELIPHKKFTFAKMWLYYAQFEIR, REFDRCRKLYEKFLEFGPENCTSWIKFAELETI, GDIERARAIYELAISQPRLDMPEVLWKSYIDFEIE, EETERTRNLYRQLLQRTQHVKVWISFAQFELS, GSVA…EFGT, SDKERVDKLMPEKVKKRRKVQADDGSDAGWEEYYDYIFP, and DAANQPNLKLLAMAKLWKKQQQEREA. Residues 250 to 467 are mediates interaction with HSP90; it reads MDEHLYVAFA…LREFDRCRKL (218 aa). Position 342 is a phosphoserine (Ser342). Positions 618–626 match the Nuclear localization signal motif; sequence PEKVKKRRK. Over residues 667–679 the composition is skewed to basic and acidic residues; it reads QQQEREAAEQDPD. A disordered region spans residues 667 to 690; sequence QQQEREAAEQDPDKDIDESESSSF. Positions 680–690 are enriched in acidic residues; the sequence is KDIDESESSSF. Residue Ser689 is modified to Phosphoserine.

The protein belongs to the crooked-neck family. In terms of assembly, identified in the spliceosome C complex. Present in a spliceosome complex assembled in vitro containing CRNKL1, HPRP8BP and SNRPB2. Component of the minor spliceosome, which splices U12-type introns. Interacts with PPIL2 (via the PPIase cyclophilin-type domain); they may form a trimeric complex with HSP90.

Its subcellular location is the nucleus. The protein localises to the nucleus speckle. Its function is as follows. Involved in pre-mRNA splicing process. As a component of the minor spliceosome, involved in the splicing of U12-type introns in pre-mRNAs. The chain is Crooked neck-like protein 1 (Crnkl1) from Mus musculus (Mouse).